The primary structure comprises 302 residues: Dihydroorotate dehydrogenase B (NAD(+)), catalytic subunit (302 aa).

Residues Ser-20 and 44-45 each bind FMN; that span reads KG. Substrate-binding positions include Lys-44 and 68–72; that span reads NSVGL. 2 residues coordinate FMN: Asn-98 and Asn-125. Residue Asn-125 participates in substrate binding. Cys-128 functions as the Nucleophile in the catalytic mechanism. The FMN site is built by Lys-163 and Ile-189. Residue 190–191 participates in substrate binding; it reads NT. Residues Gly-215, 241-242, and 263-264 contribute to the FMN site; these read GG and GT.

This sequence belongs to the dihydroorotate dehydrogenase family. Type 1 subfamily. In terms of assembly, heterotetramer of 2 PyrK and 2 PyrD type B subunits. FMN serves as cofactor.

It localises to the cytoplasm. The enzyme catalyses (S)-dihydroorotate + NAD(+) = orotate + NADH + H(+). Its pathway is pyrimidine metabolism; UMP biosynthesis via de novo pathway; orotate from (S)-dihydroorotate (NAD(+) route): step 1/1. Functionally, catalyzes the conversion of dihydroorotate to orotate with NAD(+) as electron acceptor. The polypeptide is Dihydroorotate dehydrogenase B (NAD(+)), catalytic subunit (pyrD) (Thermoanaerobacter sp. (strain X514)).